The sequence spans 448 residues: Phosphoglucosamine mutase (448 aa).

The Phosphoserine intermediate role is filled by S100. The Mg(2+) site is built by S100, D240, D242, and D244. Position 100 is a phosphoserine (S100).

It belongs to the phosphohexose mutase family. The cofactor is Mg(2+). In terms of processing, activated by phosphorylation.

The catalysed reaction is alpha-D-glucosamine 1-phosphate = D-glucosamine 6-phosphate. Catalyzes the conversion of glucosamine-6-phosphate to glucosamine-1-phosphate. In Clostridium perfringens (strain SM101 / Type A), this protein is Phosphoglucosamine mutase.